A 452-amino-acid polypeptide reads, in one-letter code: Probable diguanylate cyclase DgcT (452 aa).

Over 1–7 the chain is Cytoplasmic; the sequence is MEKDYLR. The helical transmembrane segment at 8–28 threads the bilayer; it reads ISSTVLVSLLFGLALVLVNSW. Residues 29-45 lie on the Periplasmic side of the membrane; that stretch reads FNQPGVEEVVPRSTYLM. Residues 46 to 66 traverse the membrane as a helical segment; it reads VMIALFFIDTVAFIFMQLYFI. The Cytoplasmic portion of the chain corresponds to 67–74; sequence YDRRQFSN. The helical transmembrane segment at 75-95 threads the bilayer; sequence CVLSLAFLSCLIYFVITVIII. At 96–111 the chain is on the periplasmic side; sequence QQIIEERLTSSVVQND. A helical transmembrane segment spans residues 112–132; it reads IAIYYLFRQMSLCILIFLALV. The Cytoplasmic segment spans residues 133 to 148; the sequence is NKVSENTKQRNLFSKK. The helical transmembrane segment at 149-169 threads the bilayer; sequence MTLCISLFFVFGGPIVAHILS. Residues 170–195 are Periplasmic-facing; the sequence is SHYESYNLHIAELTNENGQVVWKASY. A helical membrane pass occupies residues 196-216; it reads VTIMIFMWLTLLSVNLYFNGL. Over 217 to 219 the chain is Cytoplasmic; it reads RYD. A helical membrane pass occupies residues 220-240; the sequence is IWNGVTVIAFCAVLYNISLLF. Topologically, residues 241–254 are periplasmic; that stretch reads MSRYSVSTWYISRT. The helical transmembrane segment at 255-275 threads the bilayer; that stretch reads IEVVSKLTVMVIFMCHIFSAL. Topologically, residues 276–452 are cytoplasmic; sequence RVTKNIAHRD…RDVVNFCESP (177 aa). The region spanning 310–445 is the GGDEF domain; the sequence is TPYCVMIMDI…GRNKVVVRDV (136 aa). 2 residues coordinate Mg(2+): aspartate 318 and isoleucine 319. Positions 326, 331, and 335 each coordinate substrate. Glutamate 361 is a Mg(2+) binding site. Glutamate 361 (proton acceptor) is an active-site residue. Residue arginine 381 participates in substrate binding.

In terms of assembly, homodimer. Requires Mg(2+) as cofactor.

The protein resides in the cell inner membrane. The enzyme catalyses 2 GTP = 3',3'-c-di-GMP + 2 diphosphate. It functions in the pathway purine metabolism; 3',5'-cyclic di-GMP biosynthesis. In terms of biological role, probably catalyzes the synthesis of cyclic-di-GMP (c-di-GMP) via the condensation of 2 GTP molecules. Overexpression leads to a strong repression of swimming; swimming returns to normal when residues 359-360 are both mutated to Ala. Overexpression also leads to a 20-fold increase in c-di-GMP levels in vivo. Cyclic-di-GMP is a second messenger which controls cell surface-associated traits in bacteria. The polypeptide is Probable diguanylate cyclase DgcT (Escherichia coli (strain K12)).